Here is a 189-residue protein sequence, read N- to C-terminus: UPF0301 protein RrIowa_0061 (189 aa).

Belongs to the UPF0301 (AlgH) family.

The protein is UPF0301 protein RrIowa_0061 of Rickettsia rickettsii (strain Iowa).